Here is a 93-residue protein sequence, read N- to C-terminus: Putative pterin-4-alpha-carbinolamine dehydratase (93 aa).

This sequence belongs to the pterin-4-alpha-carbinolamine dehydratase family.

The enzyme catalyses (4aS,6R)-4a-hydroxy-L-erythro-5,6,7,8-tetrahydrobiopterin = (6R)-L-erythro-6,7-dihydrobiopterin + H2O. In Nostoc punctiforme (strain ATCC 29133 / PCC 73102), this protein is Putative pterin-4-alpha-carbinolamine dehydratase.